We begin with the raw amino-acid sequence, 578 residues long: PX domain-containing protein kinase-like protein (578 aa).

The PX domain occupies leucine 14–alanine 126. In terms of domain architecture, Protein kinase spans phenylalanine 88–lysine 481. Basic residues-rich tracts occupy residues isoleucine 437 to serine 448 and lysine 457 to arginine 469. Disordered regions lie at residues isoleucine 437 to serine 548 and phenylalanine 559 to glycine 578. Low complexity predominate over residues serine 483–alanine 513. A compositionally biased stretch (pro residues) spans leucine 514 to proline 530. The region spanning serine 548–alanine 567 is the WH2 domain. Over residues lysine 568–glycine 578 the composition is skewed to basic and acidic residues.

It belongs to the protein kinase superfamily. As to expression, widely expressed in all tissues examined except in heart. Isoform 1 is expressed in high levels in the brain, skeletal muscle, spleen and testis. Isoform 7 expression has yet to be demonstrated.

The protein localises to the cytoplasm. It localises to the cell membrane. Functionally, binds to and modulates brain Na,K-ATPase subunits ATP1B1 and ATP1B3 and may thereby participate in the regulation of electrical excitability and synaptic transmission. May not display kinase activity. The chain is PX domain-containing protein kinase-like protein from Homo sapiens (Human).